A 76-amino-acid chain; its full sequence is Small ribosomal subunit protein bS18 (76 aa).

This sequence belongs to the bacterial ribosomal protein bS18 family. In terms of assembly, part of the 30S ribosomal subunit. Forms a tight heterodimer with protein bS6.

In terms of biological role, binds as a heterodimer with protein bS6 to the central domain of the 16S rRNA, where it helps stabilize the platform of the 30S subunit. The sequence is that of Small ribosomal subunit protein bS18 from Pseudomonas fluorescens (strain ATCC BAA-477 / NRRL B-23932 / Pf-5).